Here is a 202-residue protein sequence, read N- to C-terminus: Superoxide dismutase [Fe] (202 aa).

Fe cation-binding residues include His30, His78, Asp164, and His168.

It belongs to the iron/manganese superoxide dismutase family. As to quaternary structure, homotetramer. Requires Fe cation as cofactor.

The enzyme catalyses 2 superoxide + 2 H(+) = H2O2 + O2. Its function is as follows. Destroys superoxide anion radicals which are normally produced within the cells and which are toxic to biological systems. This is Superoxide dismutase [Fe] (sod) from Methanothermobacter marburgensis (strain ATCC BAA-927 / DSM 2133 / JCM 14651 / NBRC 100331 / OCM 82 / Marburg) (Methanobacterium thermoautotrophicum).